Here is a 128-residue protein sequence, read N- to C-terminus: Sulfurtransferase TusD (128 aa).

Catalysis depends on C78, which acts as the Cysteine persulfide intermediate.

This sequence belongs to the DsrE/TusD family. As to quaternary structure, heterohexamer, formed by a dimer of trimers. The hexameric TusBCD complex contains 2 copies each of TusB, TusC and TusD. The TusBCD complex interacts with TusE.

Its subcellular location is the cytoplasm. Functionally, part of a sulfur-relay system required for 2-thiolation of 5-methylaminomethyl-2-thiouridine (mnm(5)s(2)U) at tRNA wobble positions. Accepts sulfur from TusA and transfers it in turn to TusE. The polypeptide is Sulfurtransferase TusD (Escherichia coli (strain 55989 / EAEC)).